Here is a 569-residue protein sequence, read N- to C-terminus: Spermatogenesis-associated protein 16 (569 aa).

Over residues 67–92 (KGIKEKQSNDLEKAAFKRKAEGEEKP) the composition is skewed to basic and acidic residues. The segment at 67 to 96 (KGIKEKQSNDLEKAAFKRKAEGEEKPTRKK) is disordered.

Belongs to the SPATA16 family. As to expression, expressed in testis.

The protein resides in the golgi apparatus. It is found in the cytoplasmic vesicle. The protein localises to the secretory vesicle. It localises to the acrosome. Functionally, essential for spermiogenesis and male fertility. Involved in the formation of sperm acrosome during spermatogenesis. This Homo sapiens (Human) protein is Spermatogenesis-associated protein 16 (SPATA16).